The following is a 31-amino-acid chain: Cycloviolacin-O6 (31 aa).

A cross-link (cyclopeptide (Gly-Asn)) is located at residues 1 to 31 (GTLPCGESCVWIPCISAAVGCSCKSKVCYKN). Disulfide bonds link cysteine 5-cysteine 21, cysteine 9-cysteine 23, and cysteine 14-cysteine 28.

In terms of processing, this is a cyclic peptide.

In terms of biological role, probably participates in a plant defense mechanism. The sequence is that of Cycloviolacin-O6 from Viola odorata (Sweet violet).